The primary structure comprises 761 residues: Phosphoribosylformylglycinamidine synthase subunit PurL (761 aa).

Positions 1 to 16 (MTGNPAAPAATSVSPP) are enriched in low complexity. Residues 1 to 21 (MTGNPAAPAATSVSPPAEQPY) form a disordered region. The active site involves histidine 57. Residues tyrosine 60 and lysine 101 each coordinate ATP. Glutamate 103 serves as a coordination point for Mg(2+). Substrate-binding positions include 104–107 (SHNH) and arginine 126. The Proton acceptor role is filled by histidine 105. Aspartate 127 contributes to the Mg(2+) binding site. Residue glutamine 252 participates in substrate binding. Residue aspartate 280 participates in Mg(2+) binding. Residue 329 to 331 (ESQ) participates in substrate binding. ATP is bound by residues asparagine 519 and glycine 556. Asparagine 557 lines the Mg(2+) pocket. Substrate is bound at residue serine 559.

It belongs to the FGAMS family. In terms of assembly, monomer. Part of the FGAM synthase complex composed of 1 PurL, 1 PurQ and 2 PurS subunits.

Its subcellular location is the cytoplasm. The enzyme catalyses N(2)-formyl-N(1)-(5-phospho-beta-D-ribosyl)glycinamide + L-glutamine + ATP + H2O = 2-formamido-N(1)-(5-O-phospho-beta-D-ribosyl)acetamidine + L-glutamate + ADP + phosphate + H(+). The protein operates within purine metabolism; IMP biosynthesis via de novo pathway; 5-amino-1-(5-phospho-D-ribosyl)imidazole from N(2)-formyl-N(1)-(5-phospho-D-ribosyl)glycinamide: step 1/2. Part of the phosphoribosylformylglycinamidine synthase complex involved in the purines biosynthetic pathway. Catalyzes the ATP-dependent conversion of formylglycinamide ribonucleotide (FGAR) and glutamine to yield formylglycinamidine ribonucleotide (FGAM) and glutamate. The FGAM synthase complex is composed of three subunits. PurQ produces an ammonia molecule by converting glutamine to glutamate. PurL transfers the ammonia molecule to FGAR to form FGAM in an ATP-dependent manner. PurS interacts with PurQ and PurL and is thought to assist in the transfer of the ammonia molecule from PurQ to PurL. The chain is Phosphoribosylformylglycinamidine synthase subunit PurL from Frankia casuarinae (strain DSM 45818 / CECT 9043 / HFP020203 / CcI3).